Consider the following 99-residue polypeptide: HssA/B-like protein 41 (99 aa).

A disordered region spans residues 1-29; that stretch reads MTLFSSISSISNPMTSSKSSISSFGSGTS.

The protein belongs to the hssA/B family.

The sequence is that of HssA/B-like protein 41 (hssl41) from Dictyostelium discoideum (Social amoeba).